We begin with the raw amino-acid sequence, 63 residues long: Large ribosomal subunit protein bL32 (63 aa).

Over residues 1 to 18 the composition is skewed to basic residues; it reads MAHPKAKVSKSRRDKRRA. The disordered stretch occupies residues 1–25; it reads MAHPKAKVSKSRRDKRRAQFNARTK.

Belongs to the bacterial ribosomal protein bL32 family.

In Chlorobium phaeovibrioides (strain DSM 265 / 1930) (Prosthecochloris vibrioformis (strain DSM 265)), this protein is Large ribosomal subunit protein bL32.